The sequence spans 366 residues: uncharacterized protein (366 aa).

Residues 59–222 enclose the CP-type G domain; the sequence is LNILHGIGET…LYDTPGIINN (164 aa).

It belongs to the TRAFAC class YlqF/YawG GTPase family.

In terms of biological role, binds GTP and GDP. This is an uncharacterized protein from Bacillus subtilis (strain 168).